The chain runs to 319 residues: tRNA uridine(34) hydroxylase (319 aa).

Residues 125-219 (LDENTVVIDA…YGKDPEVQGD (95 aa)) form the Rhodanese domain. Cys179 acts as the Cysteine persulfide intermediate in catalysis.

It belongs to the TrhO family.

It catalyses the reaction uridine(34) in tRNA + AH2 + O2 = 5-hydroxyuridine(34) in tRNA + A + H2O. Catalyzes oxygen-dependent 5-hydroxyuridine (ho5U) modification at position 34 in tRNAs. In Lactococcus lactis subsp. lactis (strain IL1403) (Streptococcus lactis), this protein is tRNA uridine(34) hydroxylase.